The following is a 180-amino-acid chain: Ribulose bisphosphate carboxylase small subunit, chloroplastic 4 (180 aa).

The N-terminal 56 residues, Met1–Ser56, are a transit peptide targeting the chloroplast.

It belongs to the RuBisCO small chain family. In terms of assembly, heterohexadecamer of 8 large and 8 small subunits. (Microbial infection) Binds to tobamovirus movement protein; this interaction seems required for viral systemic movement.

The protein localises to the plastid. It is found in the chloroplast. Its subcellular location is the cell junction. The protein resides in the plasmodesma. Functionally, ruBisCO catalyzes two reactions: the carboxylation of D-ribulose 1,5-bisphosphate, the primary event in carbon dioxide fixation, as well as the oxidative fragmentation of the pentose substrate. Both reactions occur simultaneously and in competition at the same active site. Although the small subunit is not catalytic it is essential for maximal activity. Involved in antiviral defenses. This is Ribulose bisphosphate carboxylase small subunit, chloroplastic 4 from Solanum lycopersicum (Tomato).